We begin with the raw amino-acid sequence, 219 residues long: Endo-type membrane-bound lytic murein transglycosylase A-like protein (219 aa).

It belongs to the transglycosylase Slt family.

It catalyses the reaction Endolytic cleavage of the (1-&gt;4)-beta-glycosidic linkage between N-acetylmuramic acid (MurNAc) and N-acetylglucosamine (GlcNAc) residues in peptidoglycan with concomitant formation of a 1,6-anhydrobond in the MurNAc residue.. Its function is as follows. Murein-degrading enzyme. May play a role in recycling of muropeptides during cell elongation and/or cell division (Potential). This is Endo-type membrane-bound lytic murein transglycosylase A-like protein from Shigella flexneri.